Here is a 204-residue protein sequence, read N- to C-terminus: Large ribosomal subunit protein eL15z (204 aa).

The protein belongs to the eukaryotic ribosomal protein eL15 family.

In Picea mariana (Black spruce), this protein is Large ribosomal subunit protein eL15z (SB61).